The sequence spans 443 residues: MIIDILNSDSDPAGRNIRAAIDELLKNPPEGGFPLFDGNEVTFHTVSGRIIHAEKSAVNPDADLIIVVSRHSSVNPVPVLTVHPAGNFGIAGLGGNDRELGLTSPAWMKSILQNHAEFVPEGYRVSYEITHHGPTDFPVPFFFVEVGSTEKEWNDPAACIAAAKSVLYARPSPEIVPLIGFGGTHYAVRQTAIGLETKGAFGHMMHTRDVGSVSKEMVSQMIAKSCGVFAAHIDRKALSKQEISHIEGILAEVGLEEITEGDLRKMNAMSFSTWVAYRDLAALQAPGLKIFPHGRIFDGDPAVVELPSDLFSAAFLGYEEIFLAELDKMGNIFHTTGKGGRLMPTLLTSAKNRQKVSGDLIVLSVQQITRTQDSLVEGDQITIARRQFDPVLARTLGVPSGPLYGQLVAGKPVTLPDGRMITPDMVTKVVRTSIKIPGLENYS.

The protein belongs to the DtdA deacylase family. As to quaternary structure, monomer. Requires Zn(2+) as cofactor.

The enzyme catalyses a D-aminoacyl-tRNA + H2O = a tRNA + a D-alpha-amino acid + H(+). It catalyses the reaction glycyl-tRNA(Ala) + H2O = tRNA(Ala) + glycine + H(+). In terms of biological role, D-aminoacyl-tRNA deacylase with broad substrate specificity. By recycling D-aminoacyl-tRNA to D-amino acids and free tRNA molecules, this enzyme counteracts the toxicity associated with the formation of D-aminoacyl-tRNA entities in vivo. This Methanocorpusculum labreanum (strain ATCC 43576 / DSM 4855 / Z) protein is D-aminoacyl-tRNA deacylase.